The chain runs to 262 residues: Hydroxyethylthiazole kinase (262 aa).

Position 50 (M50) interacts with substrate. ATP-binding residues include R125 and T171. G198 provides a ligand contact to substrate.

It belongs to the Thz kinase family. Mg(2+) serves as cofactor.

It catalyses the reaction 5-(2-hydroxyethyl)-4-methylthiazole + ATP = 4-methyl-5-(2-phosphooxyethyl)-thiazole + ADP + H(+). Its pathway is cofactor biosynthesis; thiamine diphosphate biosynthesis; 4-methyl-5-(2-phosphoethyl)-thiazole from 5-(2-hydroxyethyl)-4-methylthiazole: step 1/1. Its function is as follows. Catalyzes the phosphorylation of the hydroxyl group of 4-methyl-5-beta-hydroxyethylthiazole (THZ). In Escherichia coli (strain 55989 / EAEC), this protein is Hydroxyethylthiazole kinase.